The primary structure comprises 196 residues: Shikimate kinase (196 aa).

21-26 is a binding site for ATP; the sequence is GTGKSR. A Mg(2+)-binding site is contributed by serine 25. Substrate is bound by residues aspartate 43, arginine 67, and glycine 89. Arginine 126 contributes to the ATP binding site. Substrate is bound at residue arginine 145. Residue arginine 161 participates in ATP binding.

Belongs to the shikimate kinase family. In terms of assembly, monomer. Mg(2+) is required as a cofactor.

The protein resides in the cytoplasm. It carries out the reaction shikimate + ATP = 3-phosphoshikimate + ADP + H(+). It functions in the pathway metabolic intermediate biosynthesis; chorismate biosynthesis; chorismate from D-erythrose 4-phosphate and phosphoenolpyruvate: step 5/7. Functionally, catalyzes the specific phosphorylation of the 3-hydroxyl group of shikimic acid using ATP as a cosubstrate. The protein is Shikimate kinase of Deinococcus radiodurans (strain ATCC 13939 / DSM 20539 / JCM 16871 / CCUG 27074 / LMG 4051 / NBRC 15346 / NCIMB 9279 / VKM B-1422 / R1).